Reading from the N-terminus, the 509-residue chain is Pancreatic secretory granule membrane major glycoprotein GP2 (509 aa).

Residues 1–21 (MVGSYVLWLALASCILTLASP) form the signal peptide. The segment at 36-56 (DPCQNYTLLDEPSRSTENTEG) is D10C. 10 disulfide bridges follow: C38/C132, C60/C147, C82/C120, C88/C152, C113/C121, C162/C172, C166/C181, C183/C213, C201/C292, and C233/C256. Residues N40, N97, and N109 are each glycosylated (N-linked (GlcNAc...) asparagine). The region spanning 158–202 (ATDKCKNLCRPEEACSFLNGTWDCFCRSDLNSSDVHSLQPRLNCG) is the EGF-like domain. Residues N176, N188, and N232 are each glycosylated (N-linked (GlcNAc...) asparagine). Residues 200-293 (NCGAKEIQVS…TILNINFQCA (94 aa)) are ZP-N. The region spanning 200-456 (NCGAKEIQVS…PCCSRSQQRS (257 aa)) is the ZP domain. N263 and N314 each carry an N-linked (GlcNAc...) asparagine glycan. Residues 294 to 317 (YPLDMKVSLQTALHPIVSSLNISV) form a flexible ZP-N/ZP-C linker region. The interval 318–329 (DGEGEFTVRMAL) is internal hydrophobic patch (IHP). Residues 318 to 456 (DGEGEFTVRM…PCCSRSQQRS (139 aa)) form a ZP-C region. Disulfide bonds link C373/C433, C394/C449, and C438/C445. The segment at 463–471 (PARVLDLGP) is external hydrophobic patch (EHP). A lipid anchor (GPI-anchor amidated aspartate) is attached at D484. A propeptide spans 485–509 (GTPSTAGFLLAWPMLLLPILLAELF) (removed in mature form).

Interacts with SYCN. Interacts with bacterial adhesin fimH. N-glycosylated. In terms of tissue distribution, expressed in pancreas.

It localises to the zymogen granule membrane. Its subcellular location is the secreted. The protein localises to the cell membrane. The protein resides in the apical cell membrane. It is found in the membrane raft. It localises to the endosome. Functionally, functions as an intestinal M-cell transcytotic receptor specific of type-I-piliated bacteria that participates in the mucosal immune response toward these bacteria. At the apical membrane of M-cells it binds fimH, a protein of the bacteria type I pilus tip. Internalizes bound bacteria, like E.coli and S.typhimurium, from the lumen of the intestine and delivers them, through M-cells, to the underlying organized lymphoid follicles where they are captured by antigen-presenting dendritic cells to elicit a mucosal immune response. The chain is Pancreatic secretory granule membrane major glycoprotein GP2 from Canis lupus familiaris (Dog).